Reading from the N-terminus, the 739-residue chain is Phosphoribosylformylglycinamidine synthase subunit PurL (739 aa).

His-54 is a catalytic residue. Tyr-57 and Lys-96 together coordinate ATP. Mg(2+) is bound at residue Glu-98. Substrate is bound by residues 99 to 102 (SHNH) and Arg-121. The Proton acceptor role is filled by His-100. Asp-122 is a Mg(2+) binding site. Gln-245 is a substrate binding site. Residue Asp-275 coordinates Mg(2+). 319–321 (ESQ) is a binding site for substrate. ATP-binding residues include Asp-504 and Gly-541. Asn-542 is a binding site for Mg(2+). Ser-544 provides a ligand contact to substrate.

It belongs to the FGAMS family. Monomer. Part of the FGAM synthase complex composed of 1 PurL, 1 PurQ and 2 PurS subunits.

It is found in the cytoplasm. The enzyme catalyses N(2)-formyl-N(1)-(5-phospho-beta-D-ribosyl)glycinamide + L-glutamine + ATP + H2O = 2-formamido-N(1)-(5-O-phospho-beta-D-ribosyl)acetamidine + L-glutamate + ADP + phosphate + H(+). Its pathway is purine metabolism; IMP biosynthesis via de novo pathway; 5-amino-1-(5-phospho-D-ribosyl)imidazole from N(2)-formyl-N(1)-(5-phospho-D-ribosyl)glycinamide: step 1/2. Functionally, part of the phosphoribosylformylglycinamidine synthase complex involved in the purines biosynthetic pathway. Catalyzes the ATP-dependent conversion of formylglycinamide ribonucleotide (FGAR) and glutamine to yield formylglycinamidine ribonucleotide (FGAM) and glutamate. The FGAM synthase complex is composed of three subunits. PurQ produces an ammonia molecule by converting glutamine to glutamate. PurL transfers the ammonia molecule to FGAR to form FGAM in an ATP-dependent manner. PurS interacts with PurQ and PurL and is thought to assist in the transfer of the ammonia molecule from PurQ to PurL. The sequence is that of Phosphoribosylformylglycinamidine synthase subunit PurL from Lactococcus lactis subsp. cremoris (strain SK11).